Reading from the N-terminus, the 61-residue chain is Metallothionein-2 (61 aa).

The residue at position 1 (methionine 1) is an N-acetylmethionine. Residues 1-29 (MDPNCSCAAGGSCTCAGSCKCKECRCTSC) form a beta region. Cysteine 5, cysteine 7, cysteine 13, cysteine 15, cysteine 19, cysteine 21, cysteine 24, cysteine 26, cysteine 29, cysteine 33, cysteine 34, cysteine 36, cysteine 37, cysteine 41, cysteine 44, cysteine 48, cysteine 50, and cysteine 57 together coordinate a divalent metal cation. The alpha stretch occupies residues 30–61 (KKSCCSCCPVGCAKCAQGCICKGASDKCSCCA). Residue serine 58 is modified to Phosphoserine. Positions 59 and 60 each coordinate a divalent metal cation.

The protein belongs to the metallothionein superfamily. Type 1 family. As to quaternary structure, interacts with EOLA1.

Metallothioneins have a high content of cysteine residues that bind various heavy metals; these proteins are transcriptionally regulated by both heavy metals and glucocorticoids. The sequence is that of Metallothionein-2 (MT2A) from Canis lupus familiaris (Dog).